The sequence spans 341 residues: Holliday junction branch migration complex subunit RuvB (341 aa).

A large ATPase domain (RuvB-L) region spans residues 1–182 (MKDRLISAVA…FGVISRLEYY (182 aa)). ATP is bound by residues Leu-21, Arg-22, Gly-63, Lys-66, Thr-67, Thr-68, 129 to 131 (EDY), Arg-172, Tyr-182, and Arg-219. Thr-67 is a Mg(2+) binding site. A small ATPAse domain (RuvB-S) region spans residues 183–253 (RPEDLVLIVN…VAVEALKFLE (71 aa)). Residues 256-341 (PLGLDFADRR…REETDQVSLW (86 aa)) are head domain (RuvB-H). Residues Arg-311 and Arg-316 each contribute to the DNA site.

The protein belongs to the RuvB family. In terms of assembly, homohexamer. Forms an RuvA(8)-RuvB(12)-Holliday junction (HJ) complex. HJ DNA is sandwiched between 2 RuvA tetramers; dsDNA enters through RuvA and exits via RuvB. An RuvB hexamer assembles on each DNA strand where it exits the tetramer. Each RuvB hexamer is contacted by two RuvA subunits (via domain III) on 2 adjacent RuvB subunits; this complex drives branch migration. In the full resolvosome a probable DNA-RuvA(4)-RuvB(12)-RuvC(2) complex forms which resolves the HJ.

It is found in the cytoplasm. It carries out the reaction ATP + H2O = ADP + phosphate + H(+). Functionally, the RuvA-RuvB-RuvC complex processes Holliday junction (HJ) DNA during genetic recombination and DNA repair, while the RuvA-RuvB complex plays an important role in the rescue of blocked DNA replication forks via replication fork reversal (RFR). RuvA specifically binds to HJ cruciform DNA, conferring on it an open structure. The RuvB hexamer acts as an ATP-dependent pump, pulling dsDNA into and through the RuvAB complex. RuvB forms 2 homohexamers on either side of HJ DNA bound by 1 or 2 RuvA tetramers; 4 subunits per hexamer contact DNA at a time. Coordinated motions by a converter formed by DNA-disengaged RuvB subunits stimulates ATP hydrolysis and nucleotide exchange. Immobilization of the converter enables RuvB to convert the ATP-contained energy into a lever motion, pulling 2 nucleotides of DNA out of the RuvA tetramer per ATP hydrolyzed, thus driving DNA branch migration. The RuvB motors rotate together with the DNA substrate, which together with the progressing nucleotide cycle form the mechanistic basis for DNA recombination by continuous HJ branch migration. Branch migration allows RuvC to scan DNA until it finds its consensus sequence, where it cleaves and resolves cruciform DNA. The chain is Holliday junction branch migration complex subunit RuvB from Pelotomaculum thermopropionicum (strain DSM 13744 / JCM 10971 / SI).